The primary structure comprises 247 residues: Probable 2-phosphosulfolactate phosphatase (247 aa).

The protein belongs to the ComB family. The cofactor is Mg(2+).

The catalysed reaction is (2R)-O-phospho-3-sulfolactate + H2O = (2R)-3-sulfolactate + phosphate. The chain is Probable 2-phosphosulfolactate phosphatase from Clostridium perfringens (strain 13 / Type A).